Reading from the N-terminus, the 460-residue chain is tRNA-splicing endonuclease subunit Sen2 (460 aa).

The disordered stretch occupies residues 143 to 215 (EKEETPQHEP…SPSSHNGHVA (73 aa)). Basic and acidic residues predominate over residues 159–170 (SSLEGRVEKDEL). Residues Tyr364 and His372 contribute to the active site. Phosphoserine is present on residues Ser403, Ser406, and Ser410. Residue Lys411 is part of the active site.

This sequence belongs to the tRNA-intron endonuclease family. In terms of assembly, tRNA splicing endonuclease is a heterotetramer composed of TSEN2, TSEN15, TSEN34/LENG5 and TSEN54. tRNA splicing endonuclease complex also contains proteins of the pre-mRNA 3'-end processing machinery such as CLP1, CPSF1, CPSF4 and CSTF2.

Its subcellular location is the nucleus. The protein resides in the nucleolus. The catalysed reaction is pretRNA = a 3'-half-tRNA molecule with a 5'-OH end + a 5'-half-tRNA molecule with a 2',3'-cyclic phosphate end + an intron with a 2',3'-cyclic phosphate and a 5'-hydroxyl terminus.. In terms of biological role, constitutes one of the two catalytic subunit of the tRNA-splicing endonuclease complex, a complex responsible for identification and cleavage of the splice sites in pre-tRNA. It cleaves pre-tRNA at the 5'- and 3'-splice sites to release the intron. The products are an intron and two tRNA half-molecules bearing 2',3'-cyclic phosphate and 5'-OH termini. There are no conserved sequences at the splice sites, but the intron is invariably located at the same site in the gene, placing the splice sites an invariant distance from the constant structural features of the tRNA body. Probably carries the active site for 5'-splice site cleavage. The tRNA splicing endonuclease is also involved in mRNA processing via its association with pre-mRNA 3'-end processing factors, establishing a link between pre-tRNA splicing and pre-mRNA 3'-end formation, suggesting that the endonuclease subunits function in multiple RNA-processing events. The sequence is that of tRNA-splicing endonuclease subunit Sen2 (Tsen2) from Mus musculus (Mouse).